A 209-amino-acid polypeptide reads, in one-letter code: Orotate phosphoribosyltransferase (209 aa).

Residues Arg96, Lys100, His102, and 122 to 130 (EDLISTGGS) each bind 5-phospho-alpha-D-ribose 1-diphosphate. Ser126 is a binding site for orotate.

Belongs to the purine/pyrimidine phosphoribosyltransferase family. PyrE subfamily. Homodimer. It depends on Mg(2+) as a cofactor.

It carries out the reaction orotidine 5'-phosphate + diphosphate = orotate + 5-phospho-alpha-D-ribose 1-diphosphate. The protein operates within pyrimidine metabolism; UMP biosynthesis via de novo pathway; UMP from orotate: step 1/2. In terms of biological role, catalyzes the transfer of a ribosyl phosphate group from 5-phosphoribose 1-diphosphate to orotate, leading to the formation of orotidine monophosphate (OMP). This is Orotate phosphoribosyltransferase from Listeria monocytogenes serovar 1/2a (strain ATCC BAA-679 / EGD-e).